Here is a 126-residue protein sequence, read N- to C-terminus: 14 kDa phosphohistidine phosphatase (126 aa).

Lys22 is a substrate binding site. Residue His54 is the Proton acceptor of the active site. Substrate is bound at residue 95 to 97 (SMG).

The protein belongs to the janus family. In terms of assembly, monomer.

It is found in the cytoplasm. It carries out the reaction N(pros)-phospho-L-histidyl-[protein] + H2O = L-histidyl-[protein] + phosphate. The catalysed reaction is N(tele)-phospho-L-histidyl-[protein] + H2O = L-histidyl-[protein] + phosphate. In terms of biological role, exhibits phosphohistidine phosphatase activity. The polypeptide is 14 kDa phosphohistidine phosphatase (PHPT1) (Sus scrofa (Pig)).